The chain runs to 511 residues: uncharacterized protein (511 aa).

The 253-residue stretch at 2–254 (LMDYEKERTE…NFQEKAPIHE (253 aa)) folds into the CoA carboxyltransferase N-terminal domain. The tract at residues 2–506 (LMDYEKERTE…KEMTFTNRKH (505 aa)) is carboxyltransferase. Residues 260–506 (HFETPLADVI…KEMTFTNRKH (247 aa)) enclose the CoA carboxyltransferase C-terminal domain.

This sequence belongs to the AccD/PCCB family.

This is an uncharacterized protein from Bacillus subtilis (strain 168).